We begin with the raw amino-acid sequence, 554 residues long: Nonribosomal peptide synthetase ALT12 (554 aa).

A Carrier domain is found at 1 to 76 (MASLEHMKRI…TLWEAMNDTQ (76 aa)). An O-(pantetheine 4'-phosphoryl)serine modification is found at Ser35. The segment at 124–434 (VQDNVLCVAP…QRIQNEITST (311 aa)) is condensation.

It belongs to the NRP synthetase family.

It participates in mycotoxin biosynthesis. Its function is as follows. Nonribosomal peptide synthetase; part of the gene cluster that mediates the biosynthesis of the host-selective toxins (HSTs) AAL-toxins, sphinganine-analog mycotoxins responsible for Alternaria stem canker on tomato by the tomato pathotype. The biosynthesis starts with the polyketide synthase ALT1-catalyzed C-16 carbon chain assembly from one starter acetyl-CoA unit with malonyl-CoA extender units. ALT1 also selectively transfers methyl groups at the first and the third cycle of chain elongation for AAL toxin. The C-16 polyketide chain is released from the enzyme by a nucleophilic attack of a carbanion, which is derived from R-carbon of glycin by decarboxylation, on the carbonyl carbon of polyketide acyl chain. This step is probably catalyzed by a pyridoxal 5'-phosphate-dependent aminoacyl transferase ALT4. The respective functions of the other enzymes encoded by the cluster have still to be elucidated. The sphingosine N-acyltransferase-like protein ALT7 seems not to act as a resistance/self-tolerance factor against the toxin in the toxin biosynthetic gene cluster, contrary to what is expected. This Alternaria alternata (Alternaria rot fungus) protein is Nonribosomal peptide synthetase ALT12.